A 95-amino-acid chain; its full sequence is Co-chaperonin GroES (95 aa).

Belongs to the GroES chaperonin family. As to quaternary structure, heptamer of 7 subunits arranged in a ring. Interacts with the chaperonin GroEL.

It localises to the cytoplasm. In terms of biological role, together with the chaperonin GroEL, plays an essential role in assisting protein folding. The GroEL-GroES system forms a nano-cage that allows encapsulation of the non-native substrate proteins and provides a physical environment optimized to promote and accelerate protein folding. GroES binds to the apical surface of the GroEL ring, thereby capping the opening of the GroEL channel. In Desulfatibacillum aliphaticivorans, this protein is Co-chaperonin GroES.